Consider the following 107-residue polypeptide: SDSIVHVTDDSFEEEVXKSPDPVLVDYWADWCGPCKMXAPVXDEIADEYAGRVKXAKXNXDENPNTPPRYGXRGIPTLMLFRGGEVEATKVGAVSKSQLTAFLDSNX.

The Thioredoxin domain maps to 2–107 (DSIVHVTDDS…QLTAFLDSNX (106 aa)). C32 and C35 are disulfide-bonded.

This sequence belongs to the thioredoxin family.

In terms of biological role, participates in various redox reactions through the reversible oxidation of its active center dithiol to a disulfide and catalyzes dithiol-disulfide exchange reactions. This Allochromatium vinosum (Chromatium vinosum) protein is Thioredoxin (trxA).